Here is a 488-residue protein sequence, read N- to C-terminus: pH-response regulator protein palC (488 aa).

The BRO1 domain maps to 2 to 430 (PPYLYRLPTT…TVAFQPVPPV (429 aa)). Residues 449 to 488 (PPPSKFSPSRIGHLNEEQGNDSPELGETEDTSYAGKGNYF) are disordered.

Belongs to the palC family.

Its function is as follows. Required for the proteolytic cleavage of the transcription factor RIM101 in response to alkaline ambient pH. The protein is pH-response regulator protein palC of Cryptococcus neoformans var. neoformans serotype D (strain B-3501A) (Filobasidiella neoformans).